The primary structure comprises 225 residues: UPF0758 protein BCB4264_A4572 (225 aa).

Positions 103–225 constitute an MPN domain; sequence SIRSPEDCAK…FVSLKEKGHI (123 aa). His-174, His-176, and Asp-187 together coordinate Zn(2+). Positions 174–187 match the JAMM motif motif; it reads HNHPSGDPTPSRED.

It belongs to the UPF0758 family.

This Bacillus cereus (strain B4264) protein is UPF0758 protein BCB4264_A4572.